Consider the following 95-residue polypeptide: Small ribosomal subunit protein uS15 (95 aa).

It belongs to the universal ribosomal protein uS15 family. As to quaternary structure, part of the 30S ribosomal subunit. Forms a bridge to the 50S subunit in the 70S ribosome, contacting the 23S rRNA.

One of the primary rRNA binding proteins, it binds directly to 16S rRNA where it helps nucleate assembly of the platform of the 30S subunit by binding and bridging several RNA helices of the 16S rRNA. In terms of biological role, forms an intersubunit bridge (bridge B4) with the 23S rRNA of the 50S subunit in the ribosome. This is Small ribosomal subunit protein uS15 from Sulfurihydrogenibium sp. (strain YO3AOP1).